The sequence spans 328 residues: Methionyl-tRNA formyltransferase (328 aa).

Serine 121 to proline 124 is a (6S)-5,6,7,8-tetrahydrofolate binding site.

It belongs to the Fmt family.

It carries out the reaction L-methionyl-tRNA(fMet) + (6R)-10-formyltetrahydrofolate = N-formyl-L-methionyl-tRNA(fMet) + (6S)-5,6,7,8-tetrahydrofolate + H(+). Functionally, attaches a formyl group to the free amino group of methionyl-tRNA(fMet). The formyl group appears to play a dual role in the initiator identity of N-formylmethionyl-tRNA by promoting its recognition by IF2 and preventing the misappropriation of this tRNA by the elongation apparatus. The sequence is that of Methionyl-tRNA formyltransferase from Paraburkholderia phytofirmans (strain DSM 17436 / LMG 22146 / PsJN) (Burkholderia phytofirmans).